Reading from the N-terminus, the 134-residue chain is Submaxillary gland androgen-regulated protein 3A (134 aa).

A signal peptide spans 1 to 22 (MKSLTWILGLWALAACFTPGES). The segment at 19–134 (PGESQRGPRG…TDPALPTPAP (116 aa)) is disordered. Composition is skewed to pro residues over residues 28–43 (GPYP…PPCF), 50–85 (VPPP…PPYG), and 94–119 (LPPP…PPFF).

It belongs to the PROL1/PROL3 family.

The protein resides in the secreted. Its function is as follows. May play a role in protection or detoxification. In Homo sapiens (Human), this protein is Submaxillary gland androgen-regulated protein 3A (SMR3A).